Consider the following 233-residue polypeptide: Orotidine 5'-phosphate decarboxylase (233 aa).

Substrate is bound by residues Asp-13, Lys-35, 62–71, Thr-122, Arg-182, Gln-191, Gly-211, and Arg-212; that span reads DLKFHDIPNT. Catalysis depends on Lys-64, which acts as the Proton donor.

It belongs to the OMP decarboxylase family. Type 1 subfamily. Homodimer.

The catalysed reaction is orotidine 5'-phosphate + H(+) = UMP + CO2. Its pathway is pyrimidine metabolism; UMP biosynthesis via de novo pathway; UMP from orotate: step 2/2. Catalyzes the decarboxylation of orotidine 5'-monophosphate (OMP) to uridine 5'-monophosphate (UMP). This chain is Orotidine 5'-phosphate decarboxylase, found in Pseudomonas putida (strain ATCC 700007 / DSM 6899 / JCM 31910 / BCRC 17059 / LMG 24140 / F1).